The following is a 241-amino-acid chain: Phycocyanobilin:ferredoxin oxidoreductase (241 aa).

This sequence belongs to the HY2 family.

It carries out the reaction (2R,3Z)-phycocyanobilin + 4 oxidized [2Fe-2S]-[ferredoxin] = biliverdin IXalpha + 4 reduced [2Fe-2S]-[ferredoxin] + 4 H(+). Its function is as follows. Catalyzes the four-electron reduction of biliverdin IX-alpha (2-electron reduction at both the A and D rings); the reaction proceeds via an isolatable 2-electron intermediate, 181,182-dihydrobiliverdin. The chain is Phycocyanobilin:ferredoxin oxidoreductase from Prochlorococcus marinus (strain MIT 9215).